We begin with the raw amino-acid sequence, 55 residues long: Large ribosomal subunit protein bL33 (55 aa).

This sequence belongs to the bacterial ribosomal protein bL33 family.

The polypeptide is Large ribosomal subunit protein bL33 (Arthrobacter sp. (strain FB24)).